Consider the following 481-residue polypeptide: MKFEGLFLVFNSVSGNHKIIGISYLWLAYWFGMIGFYMSVLIRTELSMSGLKIITMDTLEIYNLLFTLHGLIMVFFNIMTGLFGGIGNYLYPVLLGYCDVVYPRVNLYSLLFQPIGFVLVVSSIYLEIGSGTGWTLYPPLSTSLSNVGIDFIIFGLLAAGIASTLSSVNFITTFTSVKTIGFVIDRISPAAWSIVLTSFLLLLSLPVVTAVFLMVFLDRHYNTMFFESSNSGDPVLYQHLFWFFGHPEVYIMILPGFGIISLLLSTYTTKEMFGNQTMILAMGFNSFVRLFGLGTSYVHIRFGSRYSRYFTTVTILIALPTGNKIFNWVTTLQCVESIKSLGLVLFTVLFIVNFVIGGTTGVVLGNAGIDLALHDTVYVVGHFHFVLSIGAIISMICFIIYIQRMLLFGIILSNRLSSLIAPIFMISVLLTFLPMHFTGFSPLPRRIPDYPDEMWGWNFICTLGATMMLVLKLAILFIISL.

The chain crosses the membrane as a helical span at residues 22-42 (ISYLWLAYWFGMIGFYMSVLI). Ca(2+) is bound by residues E45 and G50. Helical transmembrane passes span 64 to 84 (LLFT…GLFG), 109 to 129 (SLLF…LEIG), 151 to 171 (FIIF…VNFI), 194 to 214 (IVLT…VFLM), 240 to 260 (LFWF…FGII), 278 to 298 (MILA…TSYV), 309 to 329 (YFTT…FNWV), and 343 to 363 (LVLF…TGVV). A Fe(II)-heme a-binding site is contributed by H69. H246 is a binding site for Cu cation. The segment at residues 246-250 (HPEVY) is a cross-link (1'-histidyl-3'-tyrosine (His-Tyr)). Y250 contributes to the O2 binding site. Mg(2+) is bound by residues H374 and D375. H382 contacts heme a3. 2 consecutive transmembrane segments (helical) span residues 382–402 (HFHF…IIYI) and 420–440 (IAPI…FTGF). Position 384 (H384) interacts with Fe(II)-heme a. Residue P448 participates in Ca(2+) binding. Residues 459 to 479 (FICTLGATMMLVLKLAILFII) traverse the membrane as a helical segment.

Belongs to the heme-copper respiratory oxidase family. As to quaternary structure, component of the cytochrome c oxidase (complex IV, CIV), a multisubunit enzyme composed of a catalytic core of 3 subunits and several supernumerary subunits. The complex exists as a monomer or a dimer and forms supercomplexes (SCs) in the inner mitochondrial membrane with ubiquinol-cytochrome c oxidoreductase (cytochrome b-c1 complex, complex III, CIII). Requires heme as cofactor. The cofactor is Cu cation.

It is found in the mitochondrion inner membrane. It catalyses the reaction 4 Fe(II)-[cytochrome c] + O2 + 8 H(+)(in) = 4 Fe(III)-[cytochrome c] + 2 H2O + 4 H(+)(out). The protein operates within energy metabolism; oxidative phosphorylation. Its function is as follows. Component of the cytochrome c oxidase, the last enzyme in the mitochondrial electron transport chain which drives oxidative phosphorylation. The respiratory chain contains 3 multisubunit complexes succinate dehydrogenase (complex II, CII), ubiquinol-cytochrome c oxidoreductase (cytochrome b-c1 complex, complex III, CIII) and cytochrome c oxidase (complex IV, CIV), that cooperate to transfer electrons derived from NADH and succinate to molecular oxygen, creating an electrochemical gradient over the inner membrane that drives transmembrane transport and the ATP synthase. Cytochrome c oxidase is the component of the respiratory chain that catalyzes the reduction of oxygen to water. Electrons originating from reduced cytochrome c in the intermembrane space (IMS) are transferred via the dinuclear copper A center (CU(A)) of subunit 2 and heme A of subunit 1 to the active site in subunit 1, a binuclear center (BNC) formed by heme A3 and copper B (CU(B)). The BNC reduces molecular oxygen to 2 water molecules using 4 electrons from cytochrome c in the IMS and 4 protons from the mitochondrial matrix. The chain is Cytochrome c oxidase subunit 1 (MT-CO1) from Theileria parva (East coast fever infection agent).